The following is a 210-amino-acid chain: TM2 domain-containing protein C02F5.13 (210 aa).

Positions 1–18 (MRRLPWLIPFFLVNISNG) are cleaved as a signal peptide. Residues 19 to 138 (NNEFRIEFEY…PRTFTKSTPC (120 aa)) lie on the Extracellular side of the membrane. N-linked (GlcNAc...) asparagine glycosylation occurs at Asn-91. The chain crosses the membrane as a helical span at residues 139 to 159 (IIYNGHYFLTTLLYSIFLGVV). Residues 143–191 (GHYFLTTLLYSIFLGVVAVDRFCLGYSAMAVGKLMTLGGFGIWWIVDIF) form the TM2 domain. Residues 160–178 (AVDRFCLGYSAMAVGKLMT) lie on the Cytoplasmic side of the membrane. A helical transmembrane segment spans residues 179–199 (LGGFGIWWIVDIFLLVLGVLG). Over 200-210 (PADDSSWEPYY) the chain is Extracellular.

It belongs to the TM2 family.

The protein resides in the membrane. This chain is TM2 domain-containing protein C02F5.13, found in Caenorhabditis elegans.